The primary structure comprises 438 residues: Probable trafficking protein particle complex subunit 13 homolog (438 aa).

The protein belongs to the TRAPPC13 family.

This Drosophila melanogaster (Fruit fly) protein is Probable trafficking protein particle complex subunit 13 homolog.